A 166-amino-acid polypeptide reads, in one-letter code: Large ribosomal subunit protein uL10 (166 aa).

This sequence belongs to the universal ribosomal protein uL10 family. Part of the ribosomal stalk of the 50S ribosomal subunit. The N-terminus interacts with L11 and the large rRNA to form the base of the stalk. The C-terminus forms an elongated spine to which L12 dimers bind in a sequential fashion forming a multimeric L10(L12)X complex.

Its function is as follows. Forms part of the ribosomal stalk, playing a central role in the interaction of the ribosome with GTP-bound translation factors. The polypeptide is Large ribosomal subunit protein uL10 (Shewanella woodyi (strain ATCC 51908 / MS32)).